Reading from the N-terminus, the 419-residue chain is Peroxisomal membrane protein PMP47B (419 aa).

3 Solcar repeats span residues 6–120 (YDDL…TGKT), 142–230 (LSVW…LKSF), and 239–369 (VTPV…LLIL). A helical transmembrane segment spans residues 12–32 (AFAGAGGGLLSMTLTYPLVTL). Basic and acidic residues predominate over residues 44-53 (KNEEEEKENS). Positions 44 to 69 (KNEEEEKENSNEDGSLSPKSSNTSNI) are disordered. Over residues 56–69 (DGSLSPKSSNTSNI) the composition is skewed to polar residues. Helical transmembrane passes span 98 to 118 (SALF…ELTG), 204 to 224 (FTGI…YTIF), and 245 to 265 (LLLG…YITL). Residues 274–305 (MTENNEDSEKERTDSVQSLPEDGSDEDNSKEN) form a disordered region. 2 consecutive transmembrane segments (helical) span residues 310–330 (TINK…IIGY) and 349–369 (LLQS…LLIL).

The protein belongs to the mitochondrial carrier (TC 2.A.29) family.

The protein localises to the peroxisome membrane. Functionally, may have transport activity. The protein is Peroxisomal membrane protein PMP47B (PMP47B) of Candida boidinii (Yeast).